The sequence spans 182 residues: Phospholipase A2 inhibitor gamma subunit A2 (182 aa).

Intrachain disulfides connect Cys-3/Cys-27, Cys-6/Cys-13, Cys-20/Cys-48, Cys-54/Cys-75, Cys-76/Cys-81, Cys-99/Cys-124, Cys-117/Cys-146, and Cys-150/Cys-172. Asn-157 is a glycosylation site (N-linked (GlcNAc...) asparagine).

The protein belongs to the CNF-like-inhibitor family. Heterodimer of subunit A and subunit B.

Its subcellular location is the secreted. Phospholipase A2 (PA2) inhibitor. Inhibits the enzymatic activity of PA2 of Deinagkistrodon acutus. Also shows a wide anti-hemorrhage activities to D.acutus, Naja atra and Agkistrodon halys venom. The native protein is more potent than the recombinant one. In Trimerodytes annularis (Red-bellied annulate keelback), this protein is Phospholipase A2 inhibitor gamma subunit A2.